We begin with the raw amino-acid sequence, 311 residues long: MLRITVKTLQQRASFHHSFKHISVPDLHTRAQNDQTNCYCQEINARLPSKTDPLDPHIKLPHRTPNYNKHVLLLSPGDRFAQPWKVAWNHNLDTNTNRPYNAISKLRSHLGGSPGILINAVHLQNEFIPRPKQHDEWLYFFVIPDMKLYVIKETDIEEFASFLDEGAIQAPKLSFQDYLSGKAKASQQVHEVHHRKLTRFQGETFLRDWNLVCGHYKRDAKCGEMGPDIIAAFQDEKLFPENNLALISHIGGHIFAGNVIFYKLFGREKMQNKLDSLWFGKVYPHNLKLLCENLENGKIIDEMYRGGISMN.

It belongs to the AIM32 family.

This Saccharomyces cerevisiae (strain JAY291) (Baker's yeast) protein is Altered inheritance of mitochondria protein 32 (AIM32).